A 398-amino-acid chain; its full sequence is NADH-ubiquinone oxidoreductase 49 kDa subunit (398 aa).

Belongs to the complex I 49 kDa subunit family.

Its subcellular location is the mitochondrion. It catalyses the reaction a ubiquinone + NADH + 5 H(+)(in) = a ubiquinol + NAD(+) + 4 H(+)(out). In terms of biological role, core subunit of the mitochondrial membrane respiratory chain NADH dehydrogenase (Complex I) that is believed to belong to the minimal assembly required for catalysis. Complex I functions in the transfer of electrons from NADH to the respiratory chain. The immediate electron acceptor for the enzyme is believed to be ubiquinone. Component of the iron-sulfur (IP) fragment of the enzyme. Component of the iron-sulfur (IP) fragment of the enzyme. This Cafeteria roenbergensis (Marine flagellate) protein is NADH-ubiquinone oxidoreductase 49 kDa subunit (NAD7).